The primary structure comprises 335 residues: Fructose-1,6-bisphosphatase class 1 (335 aa).

The Mg(2+) site is built by glutamate 92, aspartate 115, leucine 117, and aspartate 118. Substrate contacts are provided by residues aspartate 118–serine 121, asparagine 211, tyrosine 244, tyrosine 262–tyrosine 264, and lysine 274. Glutamate 280 serves as a coordination point for Mg(2+).

Belongs to the FBPase class 1 family. As to quaternary structure, homotetramer. Requires Mg(2+) as cofactor.

The protein localises to the cytoplasm. The catalysed reaction is beta-D-fructose 1,6-bisphosphate + H2O = beta-D-fructose 6-phosphate + phosphate. It functions in the pathway carbohydrate biosynthesis; gluconeogenesis. The sequence is that of Fructose-1,6-bisphosphatase class 1 from Teredinibacter turnerae (strain ATCC 39867 / T7901).